Reading from the N-terminus, the 86-residue chain is Putative defensin-like protein 244 (86 aa).

The signal sequence occupies residues 1 to 22 (MKGIAMLLVSCLLFSFLSTNLA). 4 disulfides stabilise this stretch: Cys28-Cys83, Cys38-Cys67, Cys48-Cys77, and Cys65-Cys79.

Belongs to the DEFL family.

The protein resides in the secreted. The sequence is that of Putative defensin-like protein 244 (SCRL11) from Arabidopsis thaliana (Mouse-ear cress).